A 389-amino-acid polypeptide reads, in one-letter code: Sinapine esterase (389 aa).

The N-terminal stretch at 1 to 25 is a signal peptide; the sequence is MASSLKKLITSFLLFFFYTIIVASS. The active-site Nucleophile is serine 41. Asparagine 104, asparagine 137, and asparagine 320 each carry an N-linked (GlcNAc...) asparagine glycan. Catalysis depends on residues aspartate 345 and histidine 348. Residues asparagine 372 and asparagine 383 are each glycosylated (N-linked (GlcNAc...) asparagine).

It belongs to the 'GDSL' lipolytic enzyme family. In terms of tissue distribution, expressed in most tissues or organs of the mature seedlings. Not expressed in roots of mature seedlings.

The protein localises to the secreted. The enzyme catalyses O-sinapoylcholine + H2O = (E)-sinapate + choline + H(+). With respect to regulation, inhibited by PMSF. Sinapine esterase that catalyzes that hydrolysis of sinapine, releasing choline and sinapate. Sinapine (O-sinapoylcholine) is the predominant phenolic compound in a complex group of sinapate esters in seeds of oilseed rape (B.napus). Sinapine has antinutritive activity and prevents the use of seed protein for food and feed. Shows broad substrate specificity towards various other choline esters, including phosphatidylcholine. The sequence is that of Sinapine esterase from Brassica napus (Rape).